A 2345-amino-acid polypeptide reads, in one-letter code: Acetyl-CoA carboxylase 1 (2345 aa).

Methionine 1 carries the post-translational modification N-acetylmethionine. Phosphoserine occurs at positions 5, 23, 25, 29, 34, 47, 49, and 52. At threonine 57 the chain carries Phosphothreonine. Phosphoserine occurs at positions 77 and 79. Position 79 is a phosphoserine; by AMPK (serine 79). The 502-residue stretch at 116–617 (VIEKVLIANN…DTGWLDRLIA (502 aa)) folds into the Biotin carboxylation domain. In terms of domain architecture, ATP-grasp spans 274–465 (SKRILNVPQD…LPAAQLQIAM (192 aa)). 300–357 (AEEVGYPVMIKASEGGGGKGIRKVNNADDFPNLFRQVQAEVPGSPIFVMRLAKQSRHL) contacts ATP. Residues glutamate 423, glutamate 436, and asparagine 438 each coordinate Mg(2+). 3 residues coordinate Mn(2+): glutamate 423, glutamate 436, and asparagine 438. The active site involves arginine 440. At threonine 609 the chain carries Phosphothreonine. The 75-residue stretch at 744–818 (FEKENDPSVM…DPGCVIAKMQ (75 aa)) folds into the Biotinyl-binding domain. Lysine 785 carries the N6-biotinyllysine modification. Phosphoserine occurs at positions 834, 1200, 1215, and 1217. The residue at position 1226 (threonine 1226) is a Phosphothreonine. A phosphoserine mark is found at serine 1258, serine 1262, and serine 1272. Lysine 1333 is subject to N6-acetyllysine. Positions 1575 to 1913 (PYVTKDLLQS…SVHSSVPLLN (339 aa)) constitute a CoA carboxyltransferase N-terminal domain. Residues 1575 to 2233 (PYVTKDLLQS…EDLVKKKIHN (659 aa)) form a carboxyltransferase region. CoA contacts are provided by arginine 1822, lysine 2126, and arginine 2128. The 317-residue stretch at 1917–2233 (PIDRIIEFVP…EDLVKKKIHN (317 aa)) folds into the CoA carboxyltransferase C-terminal domain. Position 2152 is a phosphothreonine (threonine 2152).

Monomer, homodimer, and homotetramer. Can form filamentous polymers. Interacts in its inactive phosphorylated form with the BRCT domains of BRCA1 which prevents ACACA dephosphorylation and inhibits lipid synthesis. Interacts with MID1IP1; interaction with MID1IP1 promotes oligomerization and increases its activity. It depends on Mg(2+) as a cofactor. Mn(2+) serves as cofactor. Requires biotin as cofactor. Phosphorylation on Ser-1262 is required for interaction with BRCA1. Post-translationally, phosphorylation at Ser-79 by AMPK inactivates enzyme activity. In terms of processing, the biotin cofactor is covalently attached to the central biotinyl-binding domain and is required for the catalytic activity.

It localises to the cytoplasm. The protein resides in the cytosol. The catalysed reaction is hydrogencarbonate + acetyl-CoA + ATP = malonyl-CoA + ADP + phosphate + H(+). It functions in the pathway lipid metabolism; malonyl-CoA biosynthesis; malonyl-CoA from acetyl-CoA: step 1/1. Inhibited by phosphorylation. Citrate promotes oligomerization of the protein into filaments that correspond to the most active form of the carboxylase. In terms of biological role, cytosolic enzyme that catalyzes the carboxylation of acetyl-CoA to malonyl-CoA, the first and rate-limiting step of de novo fatty acid biosynthesis. This is a 2 steps reaction starting with the ATP-dependent carboxylation of the biotin carried by the biotin carboxyl carrier (BCC) domain followed by the transfer of the carboxyl group from carboxylated biotin to acetyl-CoA. This is Acetyl-CoA carboxylase 1 from Mus musculus (Mouse).